A 205-amino-acid polypeptide reads, in one-letter code: Small ribosomal subunit protein uS4 (205 aa).

Residues 19–45 (IWGRPKSPVNRREYGPGQHGQRRKGKL) are disordered. One can recognise an S4 RNA-binding domain in the interval 94 to 157 (RRLDAVVYRA…KQLAFVLEAS (64 aa)).

As to quaternary structure, part of the 30S ribosomal subunit. Contacts protein S5. The interaction surface between S4 and S5 is involved in control of translational fidelity. May be methylated on an undetermined residue.

In terms of biological role, one of the primary rRNA binding proteins, it binds directly to 16S rRNA where it nucleates assembly of the body of the 30S subunit. Functionally, with S5 and S12 plays an important role in translational accuracy. The sequence is that of Small ribosomal subunit protein uS4 from Rhodopseudomonas palustris (strain ATCC BAA-98 / CGA009).